Here is a 577-residue protein sequence, read N- to C-terminus: MAVSERRGLSGESPAQCRWEYLSLLVLMLSGCSGRIHRLTLTGEKRADIQLNSFGFYTNGSLEVELSLLRLSLQETEDKFPKVGFSLSRVRSGSVRSYSSRNSHECPLERNSSNFLVLFLINIKDLQVQVRKYGEQKLFISPGLLPEAPSQSGPPKPDPTGTPKDNHVIHPSPKKMSAVKEDQAKLTVPQVSGDKALPAGHRHSSDGQPQSQPPTRGPSGKEKDLVLGLGHLNDSYNFSFHIVIGSRAEEGQYSLNFHNCYNTIPGQEQPFDLTVMIREKNPEGFLSAAEIPLFKLYLIMSACFLAAGIFWVSVLCKNTYSVFKIHWLMAALAFTKSVSLLFHSINYYFINSQGHPIEGLAVMHYITHLLKGALLFITIALIGSGWAFVKYMLSDKEKKIFGIVIPLQVLANVAYIVIESREEGASDYGLWKEILFLVDLICCGAILFPVVWSIRHLQDASGTDGKVAVNLAKLKLFRHYYVMVICYIYFTRIIAILLRVAVPFQWQWLYQLLVESSTLAFFVLTGYKFQPAGDNPYLQLPQQEDEEDVQMEQVMTDSGFREGLSKVNKTASGRELL.

An N-terminal signal peptide occupies residues 1–34 (MAVSERRGLSGESPAQCRWEYLSLLVLMLSGCSG). 2 N-linked (GlcNAc...) asparagine glycosylation sites follow: N59 and N111. A disordered region spans residues 144–224 (LLPEAPSQSG…TRGPSGKEKD (81 aa)). Residues N233 and N237 are each glycosylated (N-linked (GlcNAc...) asparagine). 7 consecutive transmembrane segments (helical) span residues 296 to 316 (LYLI…SVLC), 325 to 345 (IHWL…FHSI), 369 to 389 (LLKG…WAFV), 400 to 420 (IFGI…VIES), 434 to 454 (ILFL…VWSI), 482 to 502 (VMVI…RVAV), and 506 to 526 (WQWL…VLTG).

Belongs to the LU7TM family.

It is found in the golgi apparatus. It localises to the cis-Golgi network membrane. The protein resides in the trans-Golgi network membrane. Its subcellular location is the golgi apparatus membrane. May play a role in intracellular immune modulation by activating NF-kappaB response and attenuating Toll-like-receptor response. The sequence is that of Protein GPR108 (Gpr108) from Rattus norvegicus (Rat).